Consider the following 349-residue polypeptide: S-adenosylmethionine:tRNA ribosyltransferase-isomerase (349 aa).

Belongs to the QueA family. As to quaternary structure, monomer.

It is found in the cytoplasm. It catalyses the reaction 7-aminomethyl-7-carbaguanosine(34) in tRNA + S-adenosyl-L-methionine = epoxyqueuosine(34) in tRNA + adenine + L-methionine + 2 H(+). Its pathway is tRNA modification; tRNA-queuosine biosynthesis. In terms of biological role, transfers and isomerizes the ribose moiety from AdoMet to the 7-aminomethyl group of 7-deazaguanine (preQ1-tRNA) to give epoxyqueuosine (oQ-tRNA). The sequence is that of S-adenosylmethionine:tRNA ribosyltransferase-isomerase from Ruegeria sp. (strain TM1040) (Silicibacter sp.).